A 322-amino-acid polypeptide reads, in one-letter code: Formimidoylglutamase (322 aa).

Residues histidine 127, aspartate 163, histidine 165, aspartate 167, aspartate 254, and aspartate 256 each coordinate Mn(2+).

Belongs to the arginase family. The cofactor is Mn(2+).

It catalyses the reaction N-formimidoyl-L-glutamate + H2O = formamide + L-glutamate. It functions in the pathway amino-acid degradation; L-histidine degradation into L-glutamate; L-glutamate from N-formimidoyl-L-glutamate (hydrolase route): step 1/1. Functionally, catalyzes the conversion of N-formimidoyl-L-glutamate to L-glutamate and formamide. The chain is Formimidoylglutamase from Paraburkholderia xenovorans (strain LB400).